Here is a 461-residue protein sequence, read N- to C-terminus: Fumarate hydratase class II (461 aa).

Residues 97–99 (SGT), 127–130 (HPND), 137–139 (SSN), and Thr-185 each bind substrate. The active-site Proton donor/acceptor is the His-186. Ser-316 is an active-site residue. Substrate contacts are provided by residues Ser-317 and 322-324 (KVN).

This sequence belongs to the class-II fumarase/aspartase family. Fumarase subfamily. As to quaternary structure, homotetramer.

The protein resides in the cytoplasm. The enzyme catalyses (S)-malate = fumarate + H2O. Its pathway is carbohydrate metabolism; tricarboxylic acid cycle; (S)-malate from fumarate: step 1/1. Functionally, involved in the TCA cycle. Catalyzes the stereospecific interconversion of fumarate to L-malate. The sequence is that of Fumarate hydratase class II from Oceanobacillus iheyensis (strain DSM 14371 / CIP 107618 / JCM 11309 / KCTC 3954 / HTE831).